The sequence spans 21 residues: Cardiotoxin-like basic polypeptide ah (21 aa).

It belongs to the three-finger toxin family. Short-chain subfamily. Orphan group XV sub-subfamily. Post-translationally, contains 4 disulfide bonds. In terms of tissue distribution, expressed by the venom gland.

It is found in the secreted. The protein resides in the target cell membrane. Its function is as follows. Has hemolytic activity under low-lecithin conditions. Has low cytotoxic activity. Inhibits the expression of VEGF and bFGF in human non-small-cell lung cancer cell line NCI-H1299 in a dose-dependent manner. This is Cardiotoxin-like basic polypeptide ah from Naja atra (Chinese cobra).